The following is a 294-amino-acid chain: Nucleotide-binding protein CLB_3433 (294 aa).

8-15 (GLSGAGKT) is an ATP binding site. 59-62 (DIRG) is a GTP binding site.

This sequence belongs to the RapZ-like family.

Its function is as follows. Displays ATPase and GTPase activities. In Clostridium botulinum (strain ATCC 19397 / Type A), this protein is Nucleotide-binding protein CLB_3433.